Consider the following 587-residue polypeptide: Aspartate--tRNA(Asp/Asn) ligase (587 aa).

E173 is a binding site for L-aspartate. Residues 197–200 (QLFK) form an aspartate region. Residue R219 participates in L-aspartate binding. Residues 219-221 (RDE) and Q228 each bind ATP. H448 contacts L-aspartate. E481 is a binding site for ATP. An L-aspartate-binding site is contributed by R488. An ATP-binding site is contributed by 533-536 (GLDR).

It belongs to the class-II aminoacyl-tRNA synthetase family. Type 1 subfamily. Homodimer.

It is found in the cytoplasm. It carries out the reaction tRNA(Asx) + L-aspartate + ATP = L-aspartyl-tRNA(Asx) + AMP + diphosphate. Aspartyl-tRNA synthetase with relaxed tRNA specificity since it is able to aspartylate not only its cognate tRNA(Asp) but also tRNA(Asn). Reaction proceeds in two steps: L-aspartate is first activated by ATP to form Asp-AMP and then transferred to the acceptor end of tRNA(Asp/Asn). The chain is Aspartate--tRNA(Asp/Asn) ligase from Alcanivorax borkumensis (strain ATCC 700651 / DSM 11573 / NCIMB 13689 / SK2).